Consider the following 718-residue polypeptide: ATP-dependent RNA helicase homolog DQX1 (718 aa).

The Helicase ATP-binding domain maps to 54–222 (HLESSPTGVV…WGNSPIVRVP (169 aa)). 67–74 (GDPGSGKS) lines the ATP pocket. The DEAQ box motif lies at 167–170 (DEAQ). The region spanning 245-447 (ACQAVLELCQ…ALMRALEDLD (203 aa)) is the Helicase C-terminal domain. The tract at residues 690–718 (QLREGTAEPPAAATETSSPQEYGDGCVLQ) is disordered. The segment covering 696–708 (AEPPAAATETSSP) has biased composition (low complexity).

As to expression, ubiquitous.

The protein resides in the nucleus. Functionally, might be involved in RNA metabolism; it is missing helicase motif III and may not have helicase activity. In Mus musculus (Mouse), this protein is ATP-dependent RNA helicase homolog DQX1 (Dqx1).